The sequence spans 79 residues: Acyl carrier protein (79 aa).

The Carrier domain occupies 2 to 77 (SDIGERVKKI…DATKFLEKNA (76 aa)). At serine 37 the chain carries O-(pantetheine 4'-phosphoryl)serine.

Belongs to the acyl carrier protein (ACP) family. 4'-phosphopantetheine is transferred from CoA to a specific serine of apo-ACP by AcpS. This modification is essential for activity because fatty acids are bound in thioester linkage to the sulfhydryl of the prosthetic group.

It is found in the cytoplasm. It functions in the pathway lipid metabolism; fatty acid biosynthesis. Its function is as follows. Carrier of the growing fatty acid chain in fatty acid biosynthesis. The protein is Acyl carrier protein of Bradyrhizobium diazoefficiens (strain JCM 10833 / BCRC 13528 / IAM 13628 / NBRC 14792 / USDA 110).